Here is a 145-residue protein sequence, read N- to C-terminus: Large ribosomal subunit protein uL24 (145 aa).

Disordered regions lie at residues 1 to 21 (MKFNPFVTSDRSKNRKRHFNA) and 122 to 145 (KAKSRQVGKEKGKYKEETIEKMQE). Lys-136 is covalently cross-linked (Glycyl lysine isopeptide (Lys-Gly) (interchain with G-Cter in SUMO2)). Thr-139 bears the Phosphothreonine mark.

Belongs to the universal ribosomal protein uL24 family. Component of the large ribosomal subunit. Interacts with DHX33. Post-translationally, ufmylated by UFL1 in response to endoplasmic reticulum stress, promoting reticulophagy of endoplasmic reticulum sheets.

The protein resides in the cytoplasm. Its function is as follows. Component of the large ribosomal subunit. The ribosome is a large ribonucleoprotein complex responsible for the synthesis of proteins in the cell. The polypeptide is Large ribosomal subunit protein uL24 (Rpl26) (Rattus norvegicus (Rat)).